The primary structure comprises 362 residues: Chorismate synthase (362 aa).

R47 and R53 together coordinate NADP(+). FMN contacts are provided by residues 124–126 (RSS), G285, 300–304 (KPTAT), and R326.

This sequence belongs to the chorismate synthase family. In terms of assembly, homotetramer. The cofactor is FMNH2.

It catalyses the reaction 5-O-(1-carboxyvinyl)-3-phosphoshikimate = chorismate + phosphate. The protein operates within metabolic intermediate biosynthesis; chorismate biosynthesis; chorismate from D-erythrose 4-phosphate and phosphoenolpyruvate: step 7/7. In terms of biological role, catalyzes the anti-1,4-elimination of the C-3 phosphate and the C-6 proR hydrogen from 5-enolpyruvylshikimate-3-phosphate (EPSP) to yield chorismate, which is the branch point compound that serves as the starting substrate for the three terminal pathways of aromatic amino acid biosynthesis. This reaction introduces a second double bond into the aromatic ring system. In Cyanothece sp. (strain PCC 7425 / ATCC 29141), this protein is Chorismate synthase.